The sequence spans 562 residues: Putative transport protein PC1_1686 (562 aa).

6 consecutive transmembrane segments (helical) span residues 8 to 28, 32 to 52, 66 to 86, 93 to 113, 116 to 136, and 158 to 178; these read LLNGNYILLLFVVLSLGLCLG, LGPVQLGNSIGVLVVSLLLGQ, FMLFIFCVGVEAGPNFFSIFF, FMLALVMVGSAMLLALGLGKF, WGIGLTAGMLAGSMTSTPVLV, and HLSLGYALTYLVGLVSLIFGA. RCK C-terminal domains are found at residues 202–288 and 292–373; these read LDAD…NFRD and VFDR…RIGF. 5 consecutive transmembrane segments (helical) span residues 383–403, 406–426, 447–467, 478–498, and 537–557; these read LLAFCAFFVIGIMVGLITIQF, FTFGIGNAAGLLFAGIMLGFL, FGLMVFMAGVGLSAGSTINSS, SGLIVSLVPVVICFLFGAYVL, and GTYAIANVLLTLAGSLIVIIW.

Belongs to the AAE transporter (TC 2.A.81) family. YbjL subfamily.

The protein localises to the cell membrane. This is Putative transport protein PC1_1686 from Pectobacterium carotovorum subsp. carotovorum (strain PC1).